Here is a 256-residue protein sequence, read N- to C-terminus: Transcription factor bHLH131 (256 aa).

Residues 91–140 (VAAKKHSDAERRRRLRINSQFATLRTILPNLVKQDKASVLGETVRYFNEL) form the bHLH domain.

In terms of assembly, homodimer.

The protein resides in the nucleus. In Arabidopsis thaliana (Mouse-ear cress), this protein is Transcription factor bHLH131 (BHLH131).